The primary structure comprises 416 residues: Sarcosine oxidase subunit beta (416 aa).

FAD contacts are provided by glycine 41, histidine 42, glutamate 63, asparagine 71, threonine 76, and isoleucine 78. At histidine 182 the chain carries Tele-8alpha-FMN histidine. FAD contacts are provided by valine 206, glycine 366, and lysine 368.

It belongs to the SoxB family. In terms of assembly, heterotetramer composed of subunits alpha (SoxA), beta (SoxB), gamma (SoxG) and delta (SoxD). FAD serves as cofactor. It depends on FMN as a cofactor.

Its subcellular location is the cytoplasm. It catalyses the reaction sarcosine + (6S)-5,6,7,8-tetrahydrofolate + O2 = (6R)-5,10-methylene-5,6,7,8-tetrahydrofolate + glycine + H2O2. The catalysed reaction is sarcosine + O2 + H2O = formaldehyde + glycine + H2O2. Its function is as follows. In the presence of tetrahydrofolate, catalyzes the oxidative demethylation of sarcosine to yield glycine, 5,10-methylenetetrahydrofolate and hydrogen peroxide. In the absence of tetrahydrofolate, catalyzes the oxidative demethylation of sarcosine to yield glycine, formaldehyde and hydrogen peroxide. In Rhizobium meliloti (strain 1021) (Ensifer meliloti), this protein is Sarcosine oxidase subunit beta (soxB).